Here is a 126-residue protein sequence, read N- to C-terminus: Holo-[acyl-carrier-protein] synthase (126 aa).

Residues Asp-9 and Glu-58 each coordinate Mg(2+).

This sequence belongs to the P-Pant transferase superfamily. AcpS family. Mg(2+) serves as cofactor.

Its subcellular location is the cytoplasm. The catalysed reaction is apo-[ACP] + CoA = holo-[ACP] + adenosine 3',5'-bisphosphate + H(+). Functionally, transfers the 4'-phosphopantetheine moiety from coenzyme A to a Ser of acyl-carrier-protein. The sequence is that of Holo-[acyl-carrier-protein] synthase from Shewanella denitrificans (strain OS217 / ATCC BAA-1090 / DSM 15013).